The sequence spans 129 residues: Small ribosomal subunit protein uS11 (129 aa).

It belongs to the universal ribosomal protein uS11 family. In terms of assembly, part of the 30S ribosomal subunit. Interacts with proteins S7 and S18. Binds to IF-3.

Its function is as follows. Located on the platform of the 30S subunit, it bridges several disparate RNA helices of the 16S rRNA. Forms part of the Shine-Dalgarno cleft in the 70S ribosome. The polypeptide is Small ribosomal subunit protein uS11 (Symbiobacterium thermophilum (strain DSM 24528 / JCM 14929 / IAM 14863 / T)).